A 318-amino-acid chain; its full sequence is Thymidylate synthase (318 aa).

DUMP contacts are provided by residues R25 and 180 to 181; that span reads RR. C200 (nucleophile) is an active-site residue. DUMP is bound by residues 220-223, N231, and 261-263; these read RSGD and HIY. (6R)-5,10-methylene-5,6,7,8-tetrahydrofolate is bound at residue D223. A317 contributes to the (6R)-5,10-methylene-5,6,7,8-tetrahydrofolate binding site.

The protein belongs to the thymidylate synthase family. Bacterial-type ThyA subfamily. Homodimer.

It localises to the cytoplasm. It carries out the reaction dUMP + (6R)-5,10-methylene-5,6,7,8-tetrahydrofolate = 7,8-dihydrofolate + dTMP. The protein operates within pyrimidine metabolism; dTTP biosynthesis. Functionally, catalyzes the reductive methylation of 2'-deoxyuridine-5'-monophosphate (dUMP) to 2'-deoxythymidine-5'-monophosphate (dTMP) while utilizing 5,10-methylenetetrahydrofolate (mTHF) as the methyl donor and reductant in the reaction, yielding dihydrofolate (DHF) as a by-product. This enzymatic reaction provides an intracellular de novo source of dTMP, an essential precursor for DNA biosynthesis. The protein is Thymidylate synthase of Bacillus cereus (strain ZK / E33L).